The following is a 78-amino-acid chain: MKLTCVVIVAVLLLTACQLITADDSRGTQKHRSLRSTTKVSKAADCIEAGNYCGPTVMKLCCGFCSPYSKICMNYPKN.

The signal sequence occupies residues 1-22 (MKLTCVVIVAVLLLTACQLITA). The propeptide occupies 23–42 (DDSRGTQKHRSLRSTTKVSK). 3 disulfides stabilise this stretch: Cys46–Cys62, Cys53–Cys65, and Cys61–Cys72.

This sequence belongs to the conotoxin O1 superfamily. As to expression, expressed by the venom duct.

Its subcellular location is the secreted. Its function is as follows. Omega-conotoxins act at presynaptic membranes, they bind and block voltage-gated calcium channels (Cav). The protein is Omega-conotoxin-like 2 of Conus striatus (Striated cone).